A 155-amino-acid chain; its full sequence is MPNIMEGQLEGRGLKFGIVVSRFNEFITSRLLDGALDALNRHGADPGAIDIAWVPGAFEIPLTAQKMAARGYDAVICLGAVIRGATPHFEYVAAEVTKGIAQVSLNSGVPVIYGLITADNIEQAIERAGTKAGNKGFDAAMTAMEMANLFKVMAR.

5-amino-6-(D-ribitylamino)uracil-binding positions include phenylalanine 23, 57–59, and 80–82; these read AFE and AVI. Position 85 to 86 (85 to 86) interacts with (2S)-2-hydroxy-3-oxobutyl phosphate; the sequence is AT. Histidine 88 (proton donor) is an active-site residue. Tyrosine 113 serves as a coordination point for 5-amino-6-(D-ribitylamino)uracil. Arginine 127 is a (2S)-2-hydroxy-3-oxobutyl phosphate binding site.

This sequence belongs to the DMRL synthase family.

The catalysed reaction is (2S)-2-hydroxy-3-oxobutyl phosphate + 5-amino-6-(D-ribitylamino)uracil = 6,7-dimethyl-8-(1-D-ribityl)lumazine + phosphate + 2 H2O + H(+). It functions in the pathway cofactor biosynthesis; riboflavin biosynthesis; riboflavin from 2-hydroxy-3-oxobutyl phosphate and 5-amino-6-(D-ribitylamino)uracil: step 1/2. Functionally, catalyzes the formation of 6,7-dimethyl-8-ribityllumazine by condensation of 5-amino-6-(D-ribitylamino)uracil with 3,4-dihydroxy-2-butanone 4-phosphate. This is the penultimate step in the biosynthesis of riboflavin. This Moorella thermoacetica (strain ATCC 39073 / JCM 9320) protein is 6,7-dimethyl-8-ribityllumazine synthase.